A 349-amino-acid chain; its full sequence is Hydrophobic dipeptide epimerase (349 aa).

Residues T127 and 153–155 (KIK) each bind substrate. The Mg(2+) site is built by D186, E212, and D237. Residues K259 and 309 to 311 (DLD) contribute to the substrate site.

Belongs to the mandelate racemase/muconate lactonizing enzyme family. Mg(2+) is required as a cofactor.

Its function is as follows. Catalyzes the epimerization a variety of hydrophobic dipeptides. Epimerase activity is highest with L-Ala-L-Tyr, and lower with L-Ala-L-Met, L-Ala-L-Phe, L-Tyr-L-Ala, L-Tyr-L-Met and L-Tyr-L-Trp (in vitro). This Flavobacteria bacterium (strain MS024-2A) protein is Hydrophobic dipeptide epimerase.